We begin with the raw amino-acid sequence, 224 residues long: uncharacterized protein (224 aa).

In terms of domain architecture, 4Fe-4S spans 9–68 (SKMVDVNEITKYLPGFNCGACGYKRCDLFAEALLNKDVKLEDCPFLLRERFKENYEKLKE). [4Fe-4S] cluster contacts are provided by Cys26, Cys29, Cys34, and Cys51.

Requires [4Fe-4S] cluster as cofactor.

This is an uncharacterized protein from Methanocaldococcus jannaschii (strain ATCC 43067 / DSM 2661 / JAL-1 / JCM 10045 / NBRC 100440) (Methanococcus jannaschii).